We begin with the raw amino-acid sequence, 906 residues long: Nuclear factor NF-kappa-B p100 subunit (906 aa).

Positions alanine 34 to glycine 223 constitute an RHD domain. The short motif at arginine 336–lysine 340 is the Nuclear localization signal element. Residues phenylalanine 345–phenylalanine 374 are GRR. 6 ANK repeats span residues asparagine 472–serine 501, leucine 511–leucine 540, tyrosine 544–proline 573, glutamine 582–glycine 611, glycine 616–serine 646, and alanine 650–arginine 679. Disordered regions lie at residues valine 677 to glutamine 734 and glutamate 857 to histidine 906. Residues proline 684 to serine 695 show a composition bias toward low complexity. Acidic residues predominate over residues threonine 697–glutamine 708. One can recognise a Death domain in the interval arginine 771–glutamate 857.

As to quaternary structure, component of the NF-kappa-B RelB-p52 complex. Post-translationally, while translation occurs, the particular unfolded structure after the GRR repeat promotes the generation of p52 making it an acceptable substrate for the proteasome. This process is known as cotranslational processing. The processed form is active and the unprocessed form acts as an inhibitor (I kappa B-like), being able to form cytosolic complexes with NF-kappa B, trapping it in the cytoplasm. Complete folding of the region downstream of the GRR repeat precludes processing. Constitutive processing is tightly suppressed by its C-terminal processing inhibitory domain, named PID, which contains the death domain.

Its subcellular location is the nucleus. It is found in the cytoplasm. Functionally, NF-kappa-B is a pleiotropic transcription factor present in almost all cell types and is the endpoint of a series of signal transduction events that are initiated by a vast array of stimuli related to many biological processes such as inflammation, immunity, differentiation, cell growth, tumorigenesis and apoptosis. NF-kappa-B is a homo- or heterodimeric complex formed by the Rel-like domain-containing proteins RELA/p65, RELB, NFKB1/p105, NFKB1/p50, REL and NFKB2/p52. The dimers bind at kappa-B sites in the DNA of their target genes and the individual dimers have distinct preferences for different kappa-B sites that they can bind with distinguishable affinity and specificity. Different dimer combinations act as transcriptional activators or repressors, respectively. NF-kappa-B is controlled by various mechanisms of post-translational modification and subcellular compartmentalization as well as by interactions with other cofactors or corepressors. NF-kappa-B complexes are held in the cytoplasm in an inactive state complexed with members of the NF-kappa-B inhibitor (I-kappa-B) family. In a conventional activation pathway, I-kappa-B is phosphorylated by I-kappa-B kinases (IKKs) in response to different activators, subsequently degraded thus liberating the active NF-kappa-B complex which translocates to the nucleus. In a non-canonical activation pathway, the MAP3K14-activated CHUK/IKKA homodimer phosphorylates NFKB2/p100 associated with RelB, inducing its proteolytic processing to NFKB2/p52 and the formation of NF-kappa-B RelB-p52 complexes. The NF-kappa-B heterodimeric RelB-p52 complex is a transcriptional activator. NFKB2 appears to have dual functions such as cytoplasmic retention of attached NF-kappa-B proteins by p100 and generation of p52 by a cotranslational processing. The proteasome-mediated process ensures the production of both p52 and p100 and preserves their independent function. p52 binds to the kappa-B consensus sequence 5'-GGRNNYYCC-3', located in the enhancer region of genes involved in immune response and acute phase reactions. In concert with RELB, may play a role in the regulation of the circadian clock. The chain is Nuclear factor NF-kappa-B p100 subunit (NFKB2) from Gallus gallus (Chicken).